We begin with the raw amino-acid sequence, 274 residues long: 4-hydroxy-3-methylbut-2-enyl diphosphate reductase (274 aa).

C12 serves as a coordination point for [4Fe-4S] cluster. Positions 36 and 70 each coordinate (2E)-4-hydroxy-3-methylbut-2-enyl diphosphate. 2 residues coordinate dimethylallyl diphosphate: H36 and H70. Isopentenyl diphosphate is bound by residues H36 and H70. C92 lines the [4Fe-4S] cluster pocket. A (2E)-4-hydroxy-3-methylbut-2-enyl diphosphate-binding site is contributed by H120. H120 provides a ligand contact to dimethylallyl diphosphate. H120 lines the isopentenyl diphosphate pocket. Catalysis depends on E122, which acts as the Proton donor. Position 158 (T158) interacts with (2E)-4-hydroxy-3-methylbut-2-enyl diphosphate. Residue C186 participates in [4Fe-4S] cluster binding. (2E)-4-hydroxy-3-methylbut-2-enyl diphosphate contacts are provided by S214, S215, N216, and S258. Dimethylallyl diphosphate-binding residues include S214, S215, N216, and S258. Isopentenyl diphosphate contacts are provided by S214, S215, N216, and S258.

The protein belongs to the IspH family. [4Fe-4S] cluster serves as cofactor.

It catalyses the reaction isopentenyl diphosphate + 2 oxidized [2Fe-2S]-[ferredoxin] + H2O = (2E)-4-hydroxy-3-methylbut-2-enyl diphosphate + 2 reduced [2Fe-2S]-[ferredoxin] + 2 H(+). It carries out the reaction dimethylallyl diphosphate + 2 oxidized [2Fe-2S]-[ferredoxin] + H2O = (2E)-4-hydroxy-3-methylbut-2-enyl diphosphate + 2 reduced [2Fe-2S]-[ferredoxin] + 2 H(+). Its pathway is isoprenoid biosynthesis; dimethylallyl diphosphate biosynthesis; dimethylallyl diphosphate from (2E)-4-hydroxy-3-methylbutenyl diphosphate: step 1/1. It functions in the pathway isoprenoid biosynthesis; isopentenyl diphosphate biosynthesis via DXP pathway; isopentenyl diphosphate from 1-deoxy-D-xylulose 5-phosphate: step 6/6. Functionally, catalyzes the conversion of 1-hydroxy-2-methyl-2-(E)-butenyl 4-diphosphate (HMBPP) into a mixture of isopentenyl diphosphate (IPP) and dimethylallyl diphosphate (DMAPP). Acts in the terminal step of the DOXP/MEP pathway for isoprenoid precursor biosynthesis. This is 4-hydroxy-3-methylbut-2-enyl diphosphate reductase from Campylobacter curvus (strain 525.92).